The primary structure comprises 183 residues: Large ribosomal subunit protein uL10 (183 aa).

The protein belongs to the universal ribosomal protein uL10 family. As to quaternary structure, part of the ribosomal stalk of the 50S ribosomal subunit. The N-terminus interacts with L11 and the large rRNA to form the base of the stalk. The C-terminus forms an elongated spine to which L12 dimers bind in a sequential fashion forming a multimeric L10(L12)X complex.

In terms of biological role, forms part of the ribosomal stalk, playing a central role in the interaction of the ribosome with GTP-bound translation factors. The sequence is that of Large ribosomal subunit protein uL10 from Mesomycoplasma hyopneumoniae (strain 7448) (Mycoplasma hyopneumoniae).